A 157-amino-acid chain; its full sequence is uncharacterized protein (157 aa).

An N-acetyltransferase domain is found at 9–154; the sequence is LLINYKTLDE…ETNLNAVTNE (146 aa).

This is an uncharacterized protein from Bacillus cereus (strain B4264).